Here is a 78-residue protein sequence, read N- to C-terminus: D-alanyl carrier protein (78 aa).

The Carrier domain occupies 1–78; the sequence is MEFREQVLNL…KIVEALEELR (78 aa). The residue at position 36 (serine 36) is an O-(pantetheine 4'-phosphoryl)serine.

This sequence belongs to the DltC family. In terms of processing, 4'-phosphopantetheine is transferred from CoA to a specific serine of apo-DCP.

Its subcellular location is the cytoplasm. The protein operates within cell wall biogenesis; lipoteichoic acid biosynthesis. Carrier protein involved in the D-alanylation of lipoteichoic acid (LTA). The loading of thioester-linked D-alanine onto DltC is catalyzed by D-alanine--D-alanyl carrier protein ligase DltA. The DltC-carried D-alanyl group is further transferred to cell membrane phosphatidylglycerol (PG) by forming an ester bond, probably catalyzed by DltD. D-alanylation of LTA plays an important role in modulating the properties of the cell wall in Gram-positive bacteria, influencing the net charge of the cell wall. This Staphylococcus aureus (strain Mu50 / ATCC 700699) protein is D-alanyl carrier protein.